A 200-amino-acid chain; its full sequence is N-(5'-phosphoribosyl)anthranilate isomerase (200 aa).

The protein belongs to the TrpF family.

It carries out the reaction N-(5-phospho-beta-D-ribosyl)anthranilate = 1-(2-carboxyphenylamino)-1-deoxy-D-ribulose 5-phosphate. It functions in the pathway amino-acid biosynthesis; L-tryptophan biosynthesis; L-tryptophan from chorismate: step 3/5. This is N-(5'-phosphoribosyl)anthranilate isomerase from Endomicrobium trichonymphae.